Reading from the N-terminus, the 94-residue chain is Co-chaperonin GroES (94 aa).

The protein belongs to the GroES chaperonin family. Heptamer of 7 subunits arranged in a ring. Interacts with the chaperonin GroEL.

It is found in the cytoplasm. In terms of biological role, together with the chaperonin GroEL, plays an essential role in assisting protein folding. The GroEL-GroES system forms a nano-cage that allows encapsulation of the non-native substrate proteins and provides a physical environment optimized to promote and accelerate protein folding. GroES binds to the apical surface of the GroEL ring, thereby capping the opening of the GroEL channel. In Bacillus cereus (strain ATCC 14579 / DSM 31 / CCUG 7414 / JCM 2152 / NBRC 15305 / NCIMB 9373 / NCTC 2599 / NRRL B-3711), this protein is Co-chaperonin GroES.